A 176-amino-acid chain; its full sequence is Large ribosomal subunit protein eL20A (176 aa).

This sequence belongs to the eukaryotic ribosomal protein eL20 family. As to quaternary structure, component of the large ribosomal subunit (LSU). Mature yeast ribosomes consist of a small (40S) and a large (60S) subunit. The 40S small subunit contains 1 molecule of ribosomal RNA (18S rRNA) and at least 33 different proteins. The large 60S subunit contains 3 rRNA molecules (25S, 5.8S and 5S rRNA) and at least 46 different proteins. eL20 forms multiple interactions with RNA and proteins in the central protuberance, connecting components of core functional centers that are located far apart.

The protein resides in the cytoplasm. Functionally, component of the ribosome, a large ribonucleoprotein complex responsible for the synthesis of proteins in the cell. The small ribosomal subunit (SSU) binds messenger RNAs (mRNAs) and translates the encoded message by selecting cognate aminoacyl-transfer RNA (tRNA) molecules. The large subunit (LSU) contains the ribosomal catalytic site termed the peptidyl transferase center (PTC), which catalyzes the formation of peptide bonds, thereby polymerizing the amino acids delivered by tRNAs into a polypeptide chain. The nascent polypeptides leave the ribosome through a tunnel in the LSU and interact with protein factors that function in enzymatic processing, targeting, and the membrane insertion of nascent chains at the exit of the ribosomal tunnel. The sequence is that of Large ribosomal subunit protein eL20A (rpl2001) from Schizosaccharomyces pombe (strain 972 / ATCC 24843) (Fission yeast).